Consider the following 108-residue polypeptide: Pyrimidine/purine nucleoside phosphorylase (108 aa).

It belongs to the nucleoside phosphorylase PpnP family.

It carries out the reaction a purine D-ribonucleoside + phosphate = a purine nucleobase + alpha-D-ribose 1-phosphate. The enzyme catalyses adenosine + phosphate = alpha-D-ribose 1-phosphate + adenine. The catalysed reaction is cytidine + phosphate = cytosine + alpha-D-ribose 1-phosphate. It catalyses the reaction guanosine + phosphate = alpha-D-ribose 1-phosphate + guanine. It carries out the reaction inosine + phosphate = alpha-D-ribose 1-phosphate + hypoxanthine. The enzyme catalyses thymidine + phosphate = 2-deoxy-alpha-D-ribose 1-phosphate + thymine. The catalysed reaction is uridine + phosphate = alpha-D-ribose 1-phosphate + uracil. It catalyses the reaction xanthosine + phosphate = alpha-D-ribose 1-phosphate + xanthine. Functionally, catalyzes the phosphorolysis of diverse nucleosides, yielding D-ribose 1-phosphate and the respective free bases. Can use uridine, adenosine, guanosine, cytidine, thymidine, inosine and xanthosine as substrates. Also catalyzes the reverse reactions. The chain is Pyrimidine/purine nucleoside phosphorylase from Acinetobacter baumannii (strain AB307-0294).